Consider the following 131-residue polypeptide: Profilin (131 aa).

This sequence belongs to the profilin family. In terms of assembly, occurs in many kinds of cells as a complex with monomeric actin in a 1:1 ratio.

Its subcellular location is the cytoplasm. It localises to the cytoskeleton. Binds to actin and affects the structure of the cytoskeleton. At high concentrations, profilin prevents the polymerization of actin, whereas it enhances it at low concentrations. By binding to PIP2, it inhibits the formation of IP3 and DG. In Litchi chinensis (Lychee), this protein is Profilin.